The primary structure comprises 715 residues: Beta-galactosidase 9 (715 aa).

Positions 1–20 (MSGGAVAFLLLVAAAAVANA) are cleaved as a signal peptide. E178 (proton donor) is an active-site residue. The Nucleophile role is filled by E247.

The protein belongs to the glycosyl hydrolase 35 family.

Its subcellular location is the secreted. It is found in the extracellular space. The protein localises to the apoplast. The catalysed reaction is Hydrolysis of terminal non-reducing beta-D-galactose residues in beta-D-galactosides.. The protein is Beta-galactosidase 9 of Oryza sativa subsp. japonica (Rice).